The following is a 25-amino-acid chain: Aggression-stimulating peptide (25 aa).

Expressed by the skin glands of male frogs.

It is found in the secreted. Its function is as follows. Stimulates aggressive behavior in male frogs. No effect on female frogs. This is Aggression-stimulating peptide from Leptodactylus fallax (Mountain chicken frog).